A 37-amino-acid chain; its full sequence is Potassium channel toxin alpha-KTx 3.9 (37 aa).

3 disulfide bridges follow: Cys7-Cys27, Cys13-Cys32, and Cys17-Cys34. Residues Gly25–Cys32 are interaction with Ca(2+)-activated K(+) channels.

This sequence belongs to the short scorpion toxin superfamily. Potassium channel inhibitor family. Alpha-KTx 03 subfamily. Expressed by the venom gland.

Its subcellular location is the secreted. Its function is as follows. Binds and inhibits potassium channels. Intracerebroventricular injection into mice induces paralyzing symptoms followed by death. Its binding affinity to rat brain synaptosomes is 5-fold lower than this of KTX 1. The sequence is that of Potassium channel toxin alpha-KTx 3.9 (KTX3) from Buthus occitanus tunetanus (Common European scorpion).